The following is a 221-amino-acid chain: MKVSMSLILITLSALVTIAKAYDPSPLQDFCVAIDDPKNGVFVNGKFCKDPKQAKAEDFFSSGLNQAGITNNKVQSNVTTVNVDQIPGLNTLGISLVRIDYAPYGQNPPHTHPRATEILVLVEGTLYVGFVSSNQDNNRLFAKVLNPGDVFVFPIGMIHFQVNIGKTPAVAFAGLSSQNAGVITIADTVFGSTPPINPDILAQAFQLDVNVVKDLEAKFKN.

Residues Met-1–Ala-21 form the signal peptide. Cys-31 and Cys-48 are joined by a disulfide. Positions Ser-76 to Lys-213 constitute a Cupin type-1 domain. A glycan (N-linked (GlcNAc...) asparagine) is linked at Asn-77. Mn(2+) contacts are provided by His-110, His-112, Glu-117, and His-159.

This sequence belongs to the germin family. As to quaternary structure, oligomer (believed to be a pentamer but probably hexamer).

The protein localises to the secreted. The protein resides in the extracellular space. Its subcellular location is the apoplast. Its function is as follows. May play a role in plant defense. Probably has no oxalate oxidase activity even if the active site is conserved. The polypeptide is Germin-like protein subfamily 1 member 17 (Arabidopsis thaliana (Mouse-ear cress)).